We begin with the raw amino-acid sequence, 88 residues long: Small ribosomal subunit protein bS20 (88 aa).

Residues methionine 1 to arginine 10 are compositionally biased toward basic residues. The segment at methionine 1–arginine 24 is disordered.

It belongs to the bacterial ribosomal protein bS20 family.

Binds directly to 16S ribosomal RNA. The chain is Small ribosomal subunit protein bS20 from Desulfosudis oleivorans (strain DSM 6200 / JCM 39069 / Hxd3) (Desulfococcus oleovorans).